The following is a 267-amino-acid chain: 2-keto-3-deoxy-L-rhamnonate aldolase (267 aa).

Catalysis depends on His-49, which acts as the Proton acceptor. Gln-151 serves as a coordination point for substrate. Glu-153 is a binding site for Mg(2+). Residues Ala-178 and Asp-179 each contribute to the substrate site. A Mg(2+)-binding site is contributed by Asp-179.

This sequence belongs to the HpcH/HpaI aldolase family. KDR aldolase subfamily. In terms of assembly, homohexamer. Mg(2+) is required as a cofactor.

The enzyme catalyses 2-dehydro-3-deoxy-L-rhamnonate = (S)-lactaldehyde + pyruvate. Catalyzes the reversible retro-aldol cleavage of 2-keto-3-deoxy-L-rhamnonate (KDR) to pyruvate and lactaldehyde. The sequence is that of 2-keto-3-deoxy-L-rhamnonate aldolase from Shigella boydii serotype 4 (strain Sb227).